We begin with the raw amino-acid sequence, 799 residues long: Ribosome biogenesis protein BOP1 homolog (799 aa).

Residues 1–171 (MPRRVRAQKR…DDTSDEEHSL (171 aa)) are disordered. Over residues 58 to 69 (SESDVTDDEQID) the composition is skewed to acidic residues. Residues 70-81 (EEARQADRDLLK) show a composition bias toward basic and acidic residues. The span at 93-121 (DPSDADNDDDDDEEEAASDDDDEEEDAEP) shows a compositional bias: acidic residues. Positions 122 to 132 (SSDSSNEASDA) are enriched in low complexity. 7 WD repeats span residues 457–498 (GHKA…RVVT), 500–538 (DAEV…AAID), 584–626 (PHHA…TQHP), 629–669 (KRNR…KKLL), 670–709 (TGVR…KPYK), 713–752 (YHKY…DLGQ), and 769–799 (SDGM…KLHV).

This sequence belongs to the WD repeat BOP1/ERB1 family.

It localises to the nucleus. The protein resides in the nucleolus. The protein localises to the nucleoplasm. Functionally, required for maturation of ribosomal RNAs and formation of the large ribosomal subunit. The protein is Ribosome biogenesis protein BOP1 homolog of Monosiga brevicollis (Choanoflagellate).